The chain runs to 554 residues: Dihydroxy-acid dehydratase (554 aa).

Residue aspartate 78 coordinates Mg(2+). Cysteine 119 is a [2Fe-2S] cluster binding site. 2 residues coordinate Mg(2+): aspartate 120 and lysine 121. Position 121 is an N6-carboxylysine (lysine 121). Cysteine 192 provides a ligand contact to [2Fe-2S] cluster. Glutamate 443 is a Mg(2+) binding site. Serine 469 (proton acceptor) is an active-site residue.

This sequence belongs to the IlvD/Edd family. Homodimer. Requires [2Fe-2S] cluster as cofactor. Mg(2+) serves as cofactor.

The catalysed reaction is (2R)-2,3-dihydroxy-3-methylbutanoate = 3-methyl-2-oxobutanoate + H2O. The enzyme catalyses (2R,3R)-2,3-dihydroxy-3-methylpentanoate = (S)-3-methyl-2-oxopentanoate + H2O. It participates in amino-acid biosynthesis; L-isoleucine biosynthesis; L-isoleucine from 2-oxobutanoate: step 3/4. Its pathway is amino-acid biosynthesis; L-valine biosynthesis; L-valine from pyruvate: step 3/4. In terms of biological role, functions in the biosynthesis of branched-chain amino acids. Catalyzes the dehydration of (2R,3R)-2,3-dihydroxy-3-methylpentanoate (2,3-dihydroxy-3-methylvalerate) into 2-oxo-3-methylpentanoate (2-oxo-3-methylvalerate) and of (2R)-2,3-dihydroxy-3-methylbutanoate (2,3-dihydroxyisovalerate) into 2-oxo-3-methylbutanoate (2-oxoisovalerate), the penultimate precursor to L-isoleucine and L-valine, respectively. The protein is Dihydroxy-acid dehydratase of Clostridium novyi (strain NT).